Consider the following 997-residue polypeptide: MAKFTLSSTGYCWLNNRGQSHDDVLGVVTHLDHMVTLLLVELHHCNKLSLPGAPAPPAPCLEHLLSENLLDKLYEWGVKTGRYGNAVRLEQLKLYEQLVSHSRHQLLVHEPFLRPLLKILDSSQNEIYPPDVEKRLVILLNQLCVALMQNVHLLDLFFFSNAQQNGNGGHTNFIIFSLLIPYVHREGSLGHQARDALLLCMALSQKNSNVGKYIATYSSICPVLVTGLGGLYSRLPNQIDIKSVDWYRITTDDVTEMPELTLFMNSLEFCNAVVQVAHTAIRQQLLDFLYQGFLVPVLGPAILQTNVESQVSAMAYLDLIVRSVSEPGLIQIIVRFLLDTDKFDGQRILDVLVERLNSNDSRLCMITLSLFDTLLALNCEDLMLELMLKYLLNCQHVPISHRYKVNRSDPYGSAVEYFLNVAPDIMKKVNNVLNTNNYNGNGSSAGNGGRQTISKTIGANWNHYGMNTGETLLASYQAYLLDARNRITQCKHACDQWNNIYRYQKLSKLVNSGVNGGGHSGEDVRTYKVQMIKNFLAEFTTTAPDSAVELLLDQQQQDHRSSQCQSPAQQHLHQQQQLQATTKQLDSLQSLGDSSGYESLNIMTICSGGGSAGGSEDGRRHESWKVSSVKEDTVVDLDLSEDLFAQGTVSLGPFLTAIWGKLQTFTSNCLYVNLHLTGLISHLAWFPLPLLHSILLRPDIPTTSDTPSFHQVLKILKQQIDAELPECEESLEIVDVARSFLVDREFRLINMRKNAIESNVVLGGSGPGGPRLSNGGGGTGSSITSSLSQTTPMQLTPSSSYDPFKRNDTKRKSITNSFSSIFRRPGSSGGSNSNNSTSGSLGGSSSVTPSLSASQHHLPPSGSGSSNSSPSTTTTTGSSGVSSLLMVGSSRRESREAETQFMDHPSLPVGIGSGTVGGGGAAGPASLTSMAQPGSGHSSLEYSLVNGVGSERQRDLAVCAVVLDEWLKELSAITQEQSLVMVAAATSEQQPNRSVVS.

2 disordered regions span residues 558 to 579 and 759 to 922; these read DHRS…QQLQ and NVVL…GGAA. Positions 569–579 are enriched in low complexity; the sequence is QQHLHQQQQLQ. Residues 763–780 show a composition bias toward gly residues; sequence GGSGPGGPRLSNGGGGTG. 2 stretches are compositionally biased toward low complexity: residues 781–792 and 830–889; these read SSITSSLSQTTP and GSNS…MVGS. Gly residues predominate over residues 911–922; the sequence is IGSGTVGGGGAA.

The protein belongs to the FHIP family.

The chain is FHIP family protein CPIJ015043 from Culex quinquefasciatus (Southern house mosquito).